Consider the following 484-residue polypeptide: NADH-ubiquinone oxidoreductase chain 4 (484 aa).

Transmembrane regions (helical) follow at residues Met-1 to Gly-21, Leu-33 to Asp-53, Val-77 to Leu-97, Tyr-109 to Asp-129, Ile-130 to Ile-150, Phe-162 to Ile-182, Leu-206 to Val-226, Pro-236 to Met-256, Phe-270 to Leu-290, Phe-295 to Phe-315, Leu-326 to Val-346, Tyr-365 to Leu-385, Val-405 to Tyr-425, and Phe-448 to Ile-468.

It belongs to the complex I subunit 4 family.

It localises to the mitochondrion inner membrane. The catalysed reaction is a ubiquinone + NADH + 5 H(+)(in) = a ubiquinol + NAD(+) + 4 H(+)(out). In terms of biological role, core subunit of the mitochondrial membrane respiratory chain NADH dehydrogenase (Complex I) that is believed to belong to the minimal assembly required for catalysis. Complex I functions in the transfer of electrons from NADH to the respiratory chain. The immediate electron acceptor for the enzyme is believed to be ubiquinone. This is NADH-ubiquinone oxidoreductase chain 4 (ND4) from Mycosarcoma maydis (Corn smut fungus).